Consider the following 165-residue polypeptide: REP-associated tyrosine transposase (165 aa).

It belongs to the transposase 17 family. RAYT subfamily. In terms of assembly, monomer.

Cleavage occurs in the presence of magnesium, but is much more pronounced with manganese. In terms of biological role, transposase that is always flanked by repeated extragenic palindrome (REP) sequences, which are clustered in structures called bacterial interspersed mosaic elements (BIMEs). RayT catalyzes cleavage and recombination of BIMEs. Binds REP sequences and cleaves BIMEs both upstream and downstream of the REP sequence. Could be important in the creation of BIME variability and amplification. This Escherichia coli (strain K12) protein is REP-associated tyrosine transposase.